A 177-amino-acid chain; its full sequence is ATP-dependent protease subunit HslV (177 aa).

Threonine 4 is a catalytic residue. Na(+) is bound by residues serine 159, cysteine 162, and threonine 165.

It belongs to the peptidase T1B family. HslV subfamily. In terms of assembly, a double ring-shaped homohexamer of HslV is capped on each side by a ring-shaped HslU homohexamer. The assembly of the HslU/HslV complex is dependent on binding of ATP.

The protein resides in the cytoplasm. The catalysed reaction is ATP-dependent cleavage of peptide bonds with broad specificity.. With respect to regulation, allosterically activated by HslU binding. In terms of biological role, protease subunit of a proteasome-like degradation complex believed to be a general protein degrading machinery. This chain is ATP-dependent protease subunit HslV, found in Mesorhizobium japonicum (strain LMG 29417 / CECT 9101 / MAFF 303099) (Mesorhizobium loti (strain MAFF 303099)).